The chain runs to 338 residues: Anthranilate phosphoribosyltransferase (338 aa).

5-phospho-alpha-D-ribose 1-diphosphate is bound by residues Gly-81, 84-85 (GD), Thr-89, 91-94 (NIST), 109-117 (KHGNRNLSS), and Ala-121. Gly-81 is an anthranilate binding site. Ser-93 serves as a coordination point for Mg(2+). Asn-112 contacts anthranilate. An anthranilate-binding site is contributed by Arg-167. Mg(2+)-binding residues include Asp-226 and Glu-227.

It belongs to the anthranilate phosphoribosyltransferase family. As to quaternary structure, homodimer. Requires Mg(2+) as cofactor.

It catalyses the reaction N-(5-phospho-beta-D-ribosyl)anthranilate + diphosphate = 5-phospho-alpha-D-ribose 1-diphosphate + anthranilate. It participates in amino-acid biosynthesis; L-tryptophan biosynthesis; L-tryptophan from chorismate: step 2/5. Catalyzes the transfer of the phosphoribosyl group of 5-phosphorylribose-1-pyrophosphate (PRPP) to anthranilate to yield N-(5'-phosphoribosyl)-anthranilate (PRA). This Cereibacter sphaeroides (strain ATCC 17025 / ATH 2.4.3) (Rhodobacter sphaeroides) protein is Anthranilate phosphoribosyltransferase.